The primary structure comprises 518 residues: Cytochrome P450 monooxygenase ARMGADRAFT_1018417 (518 aa).

A helical transmembrane segment spans residues 3–23; that stretch reads LFSAYALAFSLLMIPLILYIL. Cysteine 433 is a heme binding site. Asparagine 455 carries an N-linked (GlcNAc...) asparagine glycan.

This sequence belongs to the cytochrome P450 family. The cofactor is heme.

The protein localises to the membrane. Its pathway is secondary metabolite biosynthesis. In terms of biological role, cytochrome P450 monooxygenase, part of the gene cluster that mediates the biosynthesis of melleolides, a range of antifungal and phytotoxic polyketide derivatives composed of an orsellinic acid (OA) moiety esterified to various sesquiterpene alcohols. The first step in melleolides biosynthesis is performed by the delta(6)-protoilludene synthase PRO1 which catalyzes the cyclization of farnesyl diphosphate to protoilludene. The orsellinic acid synthase armB produces OA by condensing acetyl-CoA with 3 malonyl-CoA units in a three-round chain elongation reaction folowed by a C2-C7 ring closure. ArmB further catalyzes the trans-esterification of OA to the various sesquiterpene alcohols resulting from the hydroxylation of protoilludene. The melleolides cluster also includes 5 cytochrome P450 monooxygenases, 4 NAD(+)-dependent oxidoreductases, one flavin-dependent oxidoreductase, and one O-methyltransferase. The cytochrome P450 monooxygenases may be involved in protoilludene hydroxylation to elaborate melleolides with multiple alcohol groups, such as melleolide D, which carries alcohol functionalities at C-4, C-5, C-10, and C-13. The role of the NAD(+)-dependent enzymes remains unknown. Numerous melleolides, including arnamial, show 5'-O-methylation of the aromatic moiety which may be catalyzed by the methyltransferase encoded in the cluster. The flavin-dependent oxidoreductase might represent the dehydrogenase yielding the aldehyde in position 1 of arnamial and other melleolides. Finally, several halogenase localized outside of the cluster, are able to catalyze the transfer of a single chlorine atom to the melleolide backbone, resulting in a 6'-chloromelleolide product. The chain is Cytochrome P450 monooxygenase ARMGADRAFT_1018417 from Armillaria gallica (Bulbous honey fungus).